Here is a 191-residue protein sequence, read N- to C-terminus: Lipid A 1-phosphatase (191 aa).

5 consecutive transmembrane segments (helical) span residues 22 to 42, 60 to 80, 117 to 137, 145 to 162, and 164 to 184; these read LLALSLGLILLGVFIPFPKVP, FIPTILSVAIPLIQRDAVGLF, GNFNMPSGHSSMVGLAVAFLM, YLWLLPLIPLTMLARIYL, and MHTIGAVLAGLGTGMLCVGLF.

The protein belongs to the lipid A LpxE 1-phosphatase family.

It is found in the cell inner membrane. The protein operates within bacterial outer membrane biogenesis; LPS lipid A biosynthesis. Removes the 1-phosphate group from tetra- and probably hexaacylated lipid A species. Absence of the 1-phosphate group renders the bacteria partially resistant to host-derived cationic antimicrobial peptides (CAMP), allowing it to camouflage itself from the host innate immune response, and plays a role in the long-term colonization of the host's stomach. This chain is Lipid A 1-phosphatase, found in Helicobacter pylori (strain J99 / ATCC 700824) (Campylobacter pylori J99).